Here is a 548-residue protein sequence, read N- to C-terminus: Frizzled-7-B (548 aa).

The first 18 residues, 1–18 (MLAPVSLLFCLFLQLCPS), serve as a signal peptide directing secretion. At 19-230 (AQQYHGEKGI…EEEVRFARLW (212 aa)) the chain is on the extracellular side. Positions 31-150 (PDHGFCQPIS…HGAGEICVGQ (120 aa)) constitute an FZ domain. 5 disulfides stabilise this stretch: Cys-36–Cys-97, Cys-44–Cys-90, Cys-81–Cys-118, Cys-107–Cys-147, and Cys-111–Cys-135. N-linked (GlcNAc...) asparagine glycosylation occurs at Asn-50. Residue Asn-151 is glycosylated (N-linked (GlcNAc...) asparagine). The chain crosses the membrane as a helical span at residues 231–251 (VGIWAILCGISTLFTVLTYLV). Over 252 to 262 (DMRRFSYPERP) the chain is Cytoplasmic. The helical transmembrane segment at 263 to 283 (IIFLSGCYFMVAVAYTAGFLL) threads the bilayer. Over 284 to 311 (EERAVCVERFSEDSYRTVAQGTKKEGCT) the chain is Extracellular. The helical transmembrane segment at 312 to 332 (ILFMILYFFGMASSIWWVILA) threads the bilayer. The Cytoplasmic portion of the chain corresponds to 333-353 (LTWFLSAGMKWGHEAIEANSQ). A helical transmembrane segment spans residues 354–374 (YFHLAAWAVPAVKTITILAMG). Topologically, residues 375 to 397 (QVDGDVLSGVCYVGINSVDSLRG) are extracellular. The chain crosses the membrane as a helical span at residues 398-418 (FVLAPLFVYLFLGTSFLLAGF). Residues 419 to 444 (VSLFRIRTIMKHDGTKTEKLEKLMVR) lie on the Cytoplasmic side of the membrane. A helical membrane pass occupies residues 445–465 (IGVFSVMYTVPATIVLACYFY). The Extracellular segment spans residues 466–502 (EQAFRDTWEKTWLVHTCKGYAVPCPNYNFAPMSPDFT). Residues 503–523 (VFMIKYLMTMIVGITSSFWIW) traverse the membrane as a helical segment. Over 524–548 (SGKTLQSWRRFYHRLGNGSKGETAV) the chain is Cytoplasmic. The Lys-Thr-X-X-X-Trp motif, mediates interaction with the PDZ domain of Dvl family members signature appears at 526-531 (KTLQSW). A PDZ-binding motif is present at residues 546–548 (TAV).

This sequence belongs to the G-protein coupled receptor Fz/Smo family. Interacts with wnt11 and sdc4. The extracellular domain interacts with the extracellular domain of pcdh8/papc. Interacts (via C-terminus) with dvl1 (via PDZ domain). During gastrulation, broadly expressed on the dorsal side of the embryo in deep mesodermal cells surrounding the blastopore lip and in presumptive anterior neuroectoderm. During neurulation, localized to the cranial neural crest and heart field where expression is retained at later stages in addition to new areas of expression in the neural tube, pronephros and tailbud. At tailbud stage, expressed in the pronephric duct, and broad head expression becomes more restricted to the hindbrain. In tadpoles, strongly expressed in the eye and the pericardium and myocardium of the developing heart.

Its subcellular location is the cell membrane. The protein localises to the endosome membrane. Functionally, receptor for Wnt proteins. Acts in both canonical and non-canonical Wnt pathways. Although different papers report differing Wnt preferences, wnt5a, wnt8b and wnt11 have been proposed as synergists. In the canonical Wnt pathway, acts via beta-catenin to promote the expression of the dorsal genes siamois, twin and nodal3 and to establish the dorsal axis of the embryo and induce dorsal mesoderm formation. In a non-canonical Wnt/planar cell polarity (PCP) pathway, acts with sdc4 and dvl2/dsh to regulate convergent extension cell movements during gastrulation. Triggers phosphorylation of dvl2/dsh and its translocation to the plasma membrane. In a third branch of Wnt signaling, acts in a non-canonical pathway via trimeric G proteins, and independently of dvl2/dsh, to recruit protein kinase C (PKC) to the membrane and thus activate PKC. PKC signaling controls cell sorting and tissue separation during gastrulation. In Xenopus laevis (African clawed frog), this protein is Frizzled-7-B (fzd7-b).